Here is a 179-residue protein sequence, read N- to C-terminus: Large ribosomal subunit protein uL5 (179 aa).

The protein belongs to the universal ribosomal protein uL5 family. In terms of assembly, part of the 50S ribosomal subunit; part of the 5S rRNA/L5/L18/L25 subcomplex. Contacts the 5S rRNA and the P site tRNA. Forms a bridge to the 30S subunit in the 70S ribosome.

In terms of biological role, this is one of the proteins that bind and probably mediate the attachment of the 5S RNA into the large ribosomal subunit, where it forms part of the central protuberance. In the 70S ribosome it contacts protein S13 of the 30S subunit (bridge B1b), connecting the 2 subunits; this bridge is implicated in subunit movement. Contacts the P site tRNA; the 5S rRNA and some of its associated proteins might help stabilize positioning of ribosome-bound tRNAs. This is Large ribosomal subunit protein uL5 from Aromatoleum aromaticum (strain DSM 19018 / LMG 30748 / EbN1) (Azoarcus sp. (strain EbN1)).